Consider the following 356-residue polypeptide: 1-deoxy-D-xylulose 5-phosphate reductoisomerase (356 aa).

7 residues coordinate NADPH: Thr-7, Gly-8, Ser-9, Ile-10, Gly-31, Asn-33, and Asn-111. 1-deoxy-D-xylulose 5-phosphate is bound at residue Lys-112. Residue Glu-113 coordinates NADPH. Position 131 (Asp-131) interacts with Mn(2+). Ser-132, Glu-133, Ser-155, and His-178 together coordinate 1-deoxy-D-xylulose 5-phosphate. Glu-133 lines the Mn(2+) pocket. Gly-184 lines the NADPH pocket. Residues Ser-191, Asn-196, Lys-197, and Glu-200 each coordinate 1-deoxy-D-xylulose 5-phosphate. Glu-200 is a binding site for Mn(2+).

The protein belongs to the DXR family. Mg(2+) is required as a cofactor. It depends on Mn(2+) as a cofactor.

It catalyses the reaction 2-C-methyl-D-erythritol 4-phosphate + NADP(+) = 1-deoxy-D-xylulose 5-phosphate + NADPH + H(+). It participates in isoprenoid biosynthesis; isopentenyl diphosphate biosynthesis via DXP pathway; isopentenyl diphosphate from 1-deoxy-D-xylulose 5-phosphate: step 1/6. Functionally, catalyzes the NADPH-dependent rearrangement and reduction of 1-deoxy-D-xylulose-5-phosphate (DXP) to 2-C-methyl-D-erythritol 4-phosphate (MEP). In Campylobacter jejuni subsp. doylei (strain ATCC BAA-1458 / RM4099 / 269.97), this protein is 1-deoxy-D-xylulose 5-phosphate reductoisomerase.